Consider the following 73-residue polypeptide: UPF0150 protein ssl0259 (73 aa).

It belongs to the UPF0150 family.

This chain is UPF0150 protein ssl0259, found in Synechocystis sp. (strain ATCC 27184 / PCC 6803 / Kazusa).